The primary structure comprises 1378 residues: DNA-directed RNA polymerase subunit beta (1378 aa).

Belongs to the RNA polymerase beta chain family. As to quaternary structure, the RNAP catalytic core consists of 2 alpha, 1 beta, 1 beta' and 1 omega subunit. When a sigma factor is associated with the core the holoenzyme is formed, which can initiate transcription.

It catalyses the reaction RNA(n) + a ribonucleoside 5'-triphosphate = RNA(n+1) + diphosphate. In terms of biological role, DNA-dependent RNA polymerase catalyzes the transcription of DNA into RNA using the four ribonucleoside triphosphates as substrates. The protein is DNA-directed RNA polymerase subunit beta of Ruegeria pomeroyi (strain ATCC 700808 / DSM 15171 / DSS-3) (Silicibacter pomeroyi).